The following is a 356-amino-acid chain: L-Lys-D/L-Arg epimerase (356 aa).

Substrate is bound by residues T135 and 160 to 162 (KVK). Positions 190, 216, and 241 each coordinate Mg(2+). Substrate-binding positions include K266, D296, and 319 to 321 (DLD).

This sequence belongs to the mandelate racemase/muconate lactonizing enzyme family. The cofactor is Mg(2+).

Its function is as follows. Catalyzes the epimerization of L-Lys-L-Arg to L-Lys-D-Arg. Can also catalyze the epimerization of other cationic dipeptides, such as L-Arg-L-Arg, L-Lys-L-Lys and L-Lys-L-His, but with lower efficiency (in vitro). The chain is L-Lys-D/L-Arg epimerase from Methylococcus capsulatus (strain ATCC 33009 / NCIMB 11132 / Bath).